An 84-amino-acid chain; its full sequence is Putative membrane protein insertion efficiency factor (84 aa).

The disordered stretch occupies residues 63–84; the sequence is LGGSGYDPPPPPKTPRKWKCEE.

The protein belongs to the UPF0161 family.

The protein localises to the cell inner membrane. Its function is as follows. Could be involved in insertion of integral membrane proteins into the membrane. This is Putative membrane protein insertion efficiency factor from Caulobacter sp. (strain K31).